The sequence spans 251 residues: uncharacterized protein (251 aa).

Residue 14–37 (VLGGTSAIGLATARRLIARGARLV) coordinates NADP(+). Residue Ser145 coordinates substrate. Tyr158 (proton acceptor) is an active-site residue.

The protein belongs to the short-chain dehydrogenases/reductases (SDR) family.

In terms of biological role, may be involved in the biosynthesis of a heptaene-type antibiotic. This is an uncharacterized protein from Streptomyces coelicolor.